The chain runs to 519 residues: 2-isopropylmalate synthase (519 aa).

A Pyruvate carboxyltransferase domain is found at 12–274 (VVIFDTTLRD…WCNVESTMLT (263 aa)). Residues Asp21, His209, His211, and Asn245 each contribute to the Mn(2+) site. Residues 398 to 519 (KLSSLTVIAG…QRDVPAAAAS (122 aa)) form a regulatory domain region.

The protein belongs to the alpha-IPM synthase/homocitrate synthase family. LeuA type 1 subfamily. In terms of assembly, homodimer. Requires Mn(2+) as cofactor.

The protein resides in the cytoplasm. It catalyses the reaction 3-methyl-2-oxobutanoate + acetyl-CoA + H2O = (2S)-2-isopropylmalate + CoA + H(+). The protein operates within amino-acid biosynthesis; L-leucine biosynthesis; L-leucine from 3-methyl-2-oxobutanoate: step 1/4. Functionally, catalyzes the condensation of the acetyl group of acetyl-CoA with 3-methyl-2-oxobutanoate (2-ketoisovalerate) to form 3-carboxy-3-hydroxy-4-methylpentanoate (2-isopropylmalate). This is 2-isopropylmalate synthase from Nitrobacter winogradskyi (strain ATCC 25391 / DSM 10237 / CIP 104748 / NCIMB 11846 / Nb-255).